A 359-amino-acid polypeptide reads, in one-letter code: MSERKPPYLRSALDSIPPYRPGRKVVGPDGRSAKLSSNESPFGPLPSVRQAIADAAADLNRYPDPAAAELTAALARRFHVPEEHVALGAGSVGLLQQLLEATAEPGAEVVYAWRSFEAYPLLTGLAGATPIHVPLREETHDLEALAAAVTDRTRMVFVCNPNNPTGTAVRETELAEFLDTVPEHVLVVLDEAYREYVQDPRVPDGVQLYRDRPNVAVLRTFSKAYGLAALRVGFLIGHPQVVDAVRKTLVPFAVNHLAQAAAVASLAAEQELLERVAVTVKERERVRAALLADGWTVPETEANFVWLRLGEDTLDFAAACEQAGIAVRPFAGEGVRVSIGLPDDNDAFLTVARTYPKRN.

The tract at residues 1 to 42 is disordered; it reads MSERKPPYLRSALDSIPPYRPGRKVVGPDGRSAKLSSNESPF. Lys-223 bears the N6-(pyridoxal phosphate)lysine mark.

Belongs to the class-II pyridoxal-phosphate-dependent aminotransferase family. In terms of assembly, homodimer. Pyridoxal 5'-phosphate is required as a cofactor.

The enzyme catalyses an aromatic L-alpha-amino acid + 2-oxoglutarate = an aromatic oxo-acid + L-glutamate. Functionally, aminotransferase that catalyzes the conversion of aromatic amino acids and 2-oxoglutarate into corresponding aromatic oxo acids and L-glutamate. The chain is Aromatic amino acid aminotransferase from Thermobifida fusca (strain YX).